Consider the following 213-residue polypeptide: Orotate phosphoribosyltransferase (213 aa).

A 5-phospho-alpha-D-ribose 1-diphosphate-binding site is contributed by K26. 34 to 35 (FF) is an orotate binding site. Residues 72–73 (YK), R99, K100, K103, H105, and 124–132 (DDVITAGTA) each bind 5-phospho-alpha-D-ribose 1-diphosphate. Orotate is bound by residues T128 and R156.

It belongs to the purine/pyrimidine phosphoribosyltransferase family. PyrE subfamily. In terms of assembly, homodimer. The cofactor is Mg(2+).

The catalysed reaction is orotidine 5'-phosphate + diphosphate = orotate + 5-phospho-alpha-D-ribose 1-diphosphate. It participates in pyrimidine metabolism; UMP biosynthesis via de novo pathway; UMP from orotate: step 1/2. Catalyzes the transfer of a ribosyl phosphate group from 5-phosphoribose 1-diphosphate to orotate, leading to the formation of orotidine monophosphate (OMP). This is Orotate phosphoribosyltransferase from Haemophilus ducreyi (strain 35000HP / ATCC 700724).